A 258-amino-acid chain; its full sequence is Peroxisomal membrane protein 11B (258 aa).

Position 43 is an N6-acetyllysine (Lys43). Residues 210-258 (VVRNACDLFIPLDKLGLWRCGPGIVGLCGLVSSILSILTLICPWLRLKP) are interaction with PEX19, PEX11G and FIS1 and peroxisome targeting. A helical transmembrane segment spans residues 232–254 (GIVGLCGLVSSILSILTLICPWL).

The protein belongs to the peroxin-11 family. Homodimer. Heterodimer with PEX11G. Interacts with PEX19. Interacts with FIS1.

The protein resides in the peroxisome membrane. Its function is as follows. Involved in peroxisomal proliferation. May regulate peroxisome division by recruiting the dynamin-related GTPase DNM1L to the peroxisomal membrane. Promotes membrane protrusion and elongation on the peroxisomal surface. The chain is Peroxisomal membrane protein 11B (PEX11B) from Bos taurus (Bovine).